We begin with the raw amino-acid sequence, 563 residues long: Cytochrome b (563 aa).

12 consecutive transmembrane segments (helical) span residues Ser36 to Tyr61, Ser81 to Arg104, Trp119 to Ser141, Arg193 to Gly220, Leu255 to Asn276, Ile326 to Leu345, Phe358 to Leu379, Thr387 to Pro409, Ile436 to Ile454, Thr458 to Leu476, Ile505 to Leu527, and Met539 to Tyr557. Heme-binding residues include His87 and His101. Positions 198 and 212 each coordinate heme.

The protein belongs to the cytochrome b family. It is a component of at least 2 distinct terminal oxidases, the quinol oxidase (SoxABC) and the alternate quinol oxidase with the core components SoxM and a Rieske Fe-S protein.

It localises to the cell membrane. Its function is as follows. Binds 2 heme groups (b586 and b606) which are not covalently bound to the protein. This is Cytochrome b (soxC) from Sulfolobus acidocaldarius (strain ATCC 33909 / DSM 639 / JCM 8929 / NBRC 15157 / NCIMB 11770).